Reading from the N-terminus, the 313-residue chain is Putative zinc finger protein 077L (313 aa).

Residues 174–199 (CFSITKGIECPHYSCTYIHNYSQIEH) form a C3H1-type zinc finger. Residues 294 to 313 (SDDSDSENNDEDDDWKIDLF) are disordered. The span at 296–313 (DSDSENNDEDDDWKIDLF) shows a compositional bias: acidic residues.

The protein belongs to the IIV-6 077L family.

This Invertebrate iridescent virus 6 (IIV-6) protein is Putative zinc finger protein 077L.